The primary structure comprises 177 residues: tRNA (cytidine(56)-2'-O)-methyltransferase (177 aa).

S-adenosyl-L-methionine-binding positions include L84 and 109–113 (GAEKV).

This sequence belongs to the aTrm56 family. As to quaternary structure, homodimer.

It localises to the cytoplasm. It carries out the reaction cytidine(56) in tRNA + S-adenosyl-L-methionine = 2'-O-methylcytidine(56) in tRNA + S-adenosyl-L-homocysteine + H(+). Its function is as follows. Specifically catalyzes the AdoMet-dependent 2'-O-ribose methylation of cytidine at position 56 in tRNAs. In Methanosarcina acetivorans (strain ATCC 35395 / DSM 2834 / JCM 12185 / C2A), this protein is tRNA (cytidine(56)-2'-O)-methyltransferase.